Here is a 20-residue protein sequence, read N- to C-terminus: Glutathione S-transferase 2 (20 aa).

Residues G1–L20 enclose the GST N-terminal domain. Glutathione is bound at residue Y6.

Belongs to the GST superfamily. Sigma family.

The enzyme catalyses RX + glutathione = an S-substituted glutathione + a halide anion + H(+). In terms of biological role, conjugation of reduced glutathione to a wide number of exogenous and endogenous hydrophobic electrophiles. This is Glutathione S-transferase 2 (GST2) from Ascaris suum (Pig roundworm).